We begin with the raw amino-acid sequence, 351 residues long: Tetraacyldisaccharide 4'-kinase (351 aa).

61-68 (TAGGTGKT) lines the ATP pocket.

Belongs to the LpxK family.

The catalysed reaction is a lipid A disaccharide + ATP = a lipid IVA + ADP + H(+). Its pathway is glycolipid biosynthesis; lipid IV(A) biosynthesis; lipid IV(A) from (3R)-3-hydroxytetradecanoyl-[acyl-carrier-protein] and UDP-N-acetyl-alpha-D-glucosamine: step 6/6. Its function is as follows. Transfers the gamma-phosphate of ATP to the 4'-position of a tetraacyldisaccharide 1-phosphate intermediate (termed DS-1-P) to form tetraacyldisaccharide 1,4'-bis-phosphate (lipid IVA). This is Tetraacyldisaccharide 4'-kinase from Xanthomonas campestris pv. campestris (strain 8004).